Here is a 1051-residue protein sequence, read N- to C-terminus: Ubiquitin-activating enzyme E1 2 (1051 aa).

Over residues 1–32 the composition is skewed to basic and acidic residues; it reads MLPRKREIVAGEVEDLQKKTRAGEGEATREEG. The segment at 1–42 is disordered; that stretch reads MLPRKREIVAGEVEDLQKKTRAGEGEATREEGDAAMAGRGNE. Repeat copies occupy residues 56–194 and 453–605. A 2 approximate repeats region spans residues 56–605; it reads GRETMKPLFG…GAKCNTQMVI (550 aa). ATP is bound by residues Ala472, Asp498, Arg509, Lys522, and 570–571; that span reads DN. The active-site Glycyl thioester intermediate is Cys626.

The protein belongs to the ubiquitin-activating E1 family. Monomer.

The enzyme catalyses ATP + ubiquitin + [E1 ubiquitin-activating enzyme]-L-cysteine = AMP + diphosphate + S-ubiquitinyl-[E1 ubiquitin-activating enzyme]-L-cysteine.. It participates in protein modification; protein ubiquitination. Functionally, activates ubiquitin by first adenylating its C-terminal glycine residue with ATP, and thereafter linking this residue to the side chain of a cysteine residue in E1, yielding a ubiquitin-E1 thioester and free AMP. This is Ubiquitin-activating enzyme E1 2 (UBA2) from Triticum aestivum (Wheat).